The primary structure comprises 482 residues: MKFIIKLFPEITIKSQTVRLRFIKILASNIRNVLKTLGDNIAVVRHWDNIEVRTKDENLGVQICDALTRIPGIHHILQVEEREFRDMHHIFEQAYEAYGELLHNKTFCVRVKRRGKHQFTSNEVERYVGGGLNQHIESAKVKLNHPDVTVNLEIDQDVLILVKARYEGIGGFPIGTQEDVLSLISGGFDSGVSSYMLMRRGCRVHYCFFNLGGSAHEIGVKQVAHYLWNRFGSSHKVRFVAVDFEPVVAEILEKVDDGQMGVVLKRMMVRAASKVAERYGVQAIVTGEALGQVSSQTLTNLRLIDNASDTLILRPLISHDKEHIIRLAREIGTEDFARTMPEFCGVISKSPTVKAVKAKIEAEEANFDFNILEKVVSEAQNVDIRQIAEQSSEQVVEIETVTAFAPTDVLLDIRSPDEQDDRPLQLNGVEIKSLPFYKLSSQFGDLPKEKTYLLYCERGVMSRLQALYLSEQGFDNVKVYRP.

A THUMP domain is found at 61–165 (VQICDALTRI…QDVLILVKAR (105 aa)). ATP contacts are provided by residues 183–184 (LI), Lys265, Gly287, and Gln296. A disulfide bridge connects residues Cys344 and Cys456. The 79-residue stretch at 404-482 (FAPTDVLLDI…GFDNVKVYRP (79 aa)) folds into the Rhodanese domain. Cys456 serves as the catalytic Cysteine persulfide intermediate.

This sequence belongs to the ThiI family.

It is found in the cytoplasm. It carries out the reaction [ThiI sulfur-carrier protein]-S-sulfanyl-L-cysteine + a uridine in tRNA + 2 reduced [2Fe-2S]-[ferredoxin] + ATP + H(+) = [ThiI sulfur-carrier protein]-L-cysteine + a 4-thiouridine in tRNA + 2 oxidized [2Fe-2S]-[ferredoxin] + AMP + diphosphate. It catalyses the reaction [ThiS sulfur-carrier protein]-C-terminal Gly-Gly-AMP + S-sulfanyl-L-cysteinyl-[cysteine desulfurase] + AH2 = [ThiS sulfur-carrier protein]-C-terminal-Gly-aminoethanethioate + L-cysteinyl-[cysteine desulfurase] + A + AMP + 2 H(+). It functions in the pathway cofactor biosynthesis; thiamine diphosphate biosynthesis. Its function is as follows. Catalyzes the ATP-dependent transfer of a sulfur to tRNA to produce 4-thiouridine in position 8 of tRNAs, which functions as a near-UV photosensor. Also catalyzes the transfer of sulfur to the sulfur carrier protein ThiS, forming ThiS-thiocarboxylate. This is a step in the synthesis of thiazole, in the thiamine biosynthesis pathway. The sulfur is donated as persulfide by IscS. This chain is tRNA sulfurtransferase, found in Photorhabdus laumondii subsp. laumondii (strain DSM 15139 / CIP 105565 / TT01) (Photorhabdus luminescens subsp. laumondii).